Here is a 117-residue protein sequence, read N- to C-terminus: Large ribosomal subunit protein bL20 (117 aa).

This sequence belongs to the bacterial ribosomal protein bL20 family.

In terms of biological role, binds directly to 23S ribosomal RNA and is necessary for the in vitro assembly process of the 50S ribosomal subunit. It is not involved in the protein synthesizing functions of that subunit. This chain is Large ribosomal subunit protein bL20, found in Geotalea uraniireducens (strain Rf4) (Geobacter uraniireducens).